Reading from the N-terminus, the 1136-residue chain is Unconventional myosin-Ib (1136 aa).

The Myosin motor domain maps to Ile15–Lys701. At Ser60 the chain carries Phosphoserine. Gly108–Thr115 is an ATP binding site. Residue Lys287 forms a Glycyl lysine isopeptide (Lys-Gly) (interchain with G-Cter in SUMO1); alternate linkage. Lys287 participates in a covalent cross-link: Glycyl lysine isopeptide (Lys-Gly) (interchain with G-Cter in SUMO2); alternate. The segment at Val578–Asp600 is actin-binding. 6 IQ domains span residues Leu704–Val733, Lys728–Gln748, Thr750–Cys779, Cys779–Asn808, Asn808–Arg837, and Arg837–Gly866. Residues Lys952–Pro1136 form the TH1 domain.

Belongs to the TRAFAC class myosin-kinesin ATPase superfamily. Myosin family.

Functionally, motor protein that may participate in process critical to neuronal development and function such as cell migration, neurite outgrowth and vesicular transport. The sequence is that of Unconventional myosin-Ib (MYO1B) from Homo sapiens (Human).